Consider the following 247-residue polypeptide: Leucyl/phenylalanyl-tRNA--protein transferase (247 aa).

This sequence belongs to the L/F-transferase family.

It localises to the cytoplasm. It carries out the reaction N-terminal L-lysyl-[protein] + L-leucyl-tRNA(Leu) = N-terminal L-leucyl-L-lysyl-[protein] + tRNA(Leu) + H(+). The catalysed reaction is N-terminal L-arginyl-[protein] + L-leucyl-tRNA(Leu) = N-terminal L-leucyl-L-arginyl-[protein] + tRNA(Leu) + H(+). The enzyme catalyses L-phenylalanyl-tRNA(Phe) + an N-terminal L-alpha-aminoacyl-[protein] = an N-terminal L-phenylalanyl-L-alpha-aminoacyl-[protein] + tRNA(Phe). Its function is as follows. Functions in the N-end rule pathway of protein degradation where it conjugates Leu, Phe and, less efficiently, Met from aminoacyl-tRNAs to the N-termini of proteins containing an N-terminal arginine or lysine. This is Leucyl/phenylalanyl-tRNA--protein transferase from Solidesulfovibrio magneticus (strain ATCC 700980 / DSM 13731 / RS-1) (Desulfovibrio magneticus).